A 395-amino-acid polypeptide reads, in one-letter code: uncharacterized protein (395 aa).

2 disordered regions span residues 17 to 155 (EVKK…QVKT) and 276 to 304 (EERE…HEQK). 2 stretches are compositionally biased toward polar residues: residues 42–71 (DGNN…SNVV) and 81–96 (GDAS…NVVK). Positions 103–133 (VAEKPEKEDLAVIESEDKAAKPDGEIKKNVE) are enriched in basic and acidic residues. Positions 134–143 (TEVTSRSTSS) are enriched in low complexity. 2 stretches are compositionally biased toward basic and acidic residues: residues 144–155 (QEKDELEKQVKT) and 276–290 (EERE…KEQS). Residues 224–351 (LKMNGKEDDL…QRRLKELEAM (128 aa)) are a coiled coil. The span at 291 to 300 (SEGSKTANQT) shows a compositional bias: polar residues.

Its subcellular location is the cytoplasm. This is an uncharacterized protein from Schizosaccharomyces pombe (strain 972 / ATCC 24843) (Fission yeast).